Consider the following 1113-residue polypeptide: Nucleoporin NUP116/NSP116 (1113 aa).

A disordered region spans residues 1 to 35 (MFGVSRGAFPSATTQPFGSTGSTFGGQQQQQQPVA). 4 FG repeats span residues 2 to 3 (FG), 17 to 18 (FG), 24 to 25 (FG), and 40 to 41 (FG). Residues 13 to 33 (TTQPFGSTGSTFGGQQQQQQP) are compositionally biased toward low complexity. Positions 49 to 91 (TQAPAFGNFGNQTSNSPFGMSGSTTANGTPFGQSQLTNNNASG) are disordered. A GLFG 1; approximate repeat occupies 55–58 (GNFG). FG repeat units lie at residues 66 to 67 (FG), 79 to 80 (FG), and 94 to 95 (FG). Residues 92–172 (SIFGGMGNNT…AGRKFGTSQN (81 aa)) are interaction with AFG2. The GLE2 binding sequence (GLEBS) stretch occupies residues 110-166 (VVPNSTAGTSIKPFTTFEEKDPTTGVINVFQSITCMPEYRNFSFEELRFQDYQAGRK). An interaction with MEX67, not KAP95 region spans residues 160–362 (DYQAGRKFGT…AKPASGGLFG (203 aa)). 2 FG repeats span residues 167–168 (FG) and 189–190 (FG). The GLFG 2 repeat unit spans residues 205 to 208 (GLFG). A GLFG 3; approximate repeat occupies 214-217 (GMFG). Residues 224–227 (GGFG) form a GLFG 4; approximate repeat. One copy of the GLFG 5 repeat lies at 235 to 238 (GLFG). One copy of the FG 10 repeat lies at 249 to 250 (FG). GLFG repeat units follow at residues 259–262 (GLFG), 276–279 (GLFG), and 288–291 (GLFG). A compositionally biased stretch (low complexity) spans 265–279 (TNNPTNGTNNTGLFG). Residues 265–341 (TNNPTNGTNN…SNANANGGAF (77 aa)) form a disordered region. Polar residues predominate over residues 280–304 (QQNSNTNGGLFGQQQNSFGANNVSN). An FG 11 repeat occupies 297 to 298 (FG). One copy of the GLFG 9; approximate repeat lies at 306-309 (GAFG). Residues 327 to 330 (GIFG) form a GLFG 10; approximate repeat. The span at 330 to 341 (GQSNANANGGAF) shows a compositional bias: low complexity. The stretch at 339–342 (GAFG) is one GLFG 11; approximate repeat. The stretch at 351–352 (FG) is one FG 12 repeat. Residues 359–362 (GLFG) form a GLFG 12 repeat. The interval 362–535 (GQSAGSKAFG…GAKPTGFGNT (174 aa)) is sufficient for interaction with MEX67 and KAP95. An FG 13 repeat occupies 370 to 371 (FG). The interval 371–606 (GMNTNPTGTT…NPASTSGGLF (236 aa)) is disordered. GLFG repeat units follow at residues 382–385 (GLFG), 395–398 (GLFG), 407–410 (GLFG), and 420–423 (GLFG). The segment covering 410-438 (GQNNQSQNQSGLFGQQNSSNAFGQPQQQG) has biased composition (low complexity). The FG 14 repeat unit spans residues 431 to 432 (FG). GLFG repeat units follow at residues 439 to 442 (GLFG) and 448 to 451 (GLFG). A compositionally biased stretch (polar residues) spans 451–464 (GQQQGASTFASGNA). Composition is skewed to low complexity over residues 465–478 (QNNS…QQQQ) and 485–522 (GQQN…QQNN). The stretch at 470–471 (FG) is one FG 15 repeat. GLFG repeat units follow at residues 482-485 (GLFG) and 497-500 (GLFG). FG repeat units follow at residues 510–511 (FG), 525–526 (FG), and 532–533 (FG). Over residues 532 to 569 (FGNTSLFSNSTTNQSNGISGNNLQQQSGGLFQNKQQPA) the composition is skewed to polar residues. The interval 536 to 732 (SLFSNSTTNQ…QSQNALQQQQ (197 aa)) is interaction with KAP95, not MEX67. 3 GLFG repeats span residues 572–575 (GLFG), 585–588 (GLFG), and 604–607 (GLFG). Polar residues predominate over residues 588-603 (GNNQVANQNNPASTSG). One copy of the FG 19 repeat lies at 616–617 (FG). The GLFG 24; approximate repeat unit spans residues 630 to 633 (GIFG). 3 GLFG repeats span residues 648–651 (GLFG), 665–668 (GLFG), and 683–686 (GLFG). The segment covering 678-691 (SNGSTGLFGSNNTS) has biased composition (low complexity). 2 disordered regions span residues 678 to 736 (SNGS…QQQR) and 868 to 939 (SEEK…ENVA). Residues 692-708 (QSTNAGGLFQNNTSTNT) show a composition bias toward polar residues. The segment covering 719–736 (QSMAQSQNALQQQQQQQR) has biased composition (low complexity). At S886 the chain carries Phosphoserine. Residues 916 to 939 (NDGEDSATKHHSRNMDEENKENVA) are compositionally biased toward basic and acidic residues. Positions 967 to 1109 (NENYYISPSL…GTYVFIVNHA (143 aa)) constitute a Peptidase S59 domain. Residues 967 to 1113 (NENYYISPSL…FIVNHAAEQT (147 aa)) are interaction with NUP82 NPC subcomplex. The segment at 969 to 1108 (NYYISPSLDT…SGTYVFIVNH (140 aa)) is nucleoporin RNA-binding motif (NRM).

The protein belongs to the nucleoporin GLFG family. Component of the nuclear pore complex (NPC). NPC constitutes the exclusive means of nucleocytoplasmic transport. NPCs allow the passive diffusion of ions and small molecules and the active, nuclear transport receptor-mediated bidirectional transport of macromolecules such as proteins, RNAs, ribonucleoparticles (RNPs), and ribosomal subunits across the nuclear envelope. Due to its 8-fold rotational symmetry, all subunits are present with 8 copies or multiples thereof. NUP116 interacts with the NUP82 subcomplex and GLE2. Through its FG repeats it interacts with numerous karyopherins including KAP95, PSE1 (GSP1-GDP dependent), MEX67, and to homomeric RNA. Interacts with CEX1. Interacts (via N-terminus) with AFG2 (via N-terminus).

Its subcellular location is the nucleus. It is found in the nuclear pore complex. The protein resides in the nucleus membrane. Functionally, functions as a component of the nuclear pore complex (NPC). NPC components, collectively referred to as nucleoporins (NUPs), can play the role of both NPC structural components and of docking or interaction partners for transiently associated nuclear transport factors. Active directional transport is assured by both, a Phe-Gly (FG) repeat affinity gradient for these transport factors across the NPC and a transport cofactor concentration gradient across the nuclear envelope (GSP1 and GSP2 GTPases associated predominantly with GTP in the nucleus, with GDP in the cytoplasm). Plays an important role in several nuclear export and import pathways including poly(A)+ RNA, tRNA, pre-ribosome, and protein transport. By binding ATPase AFG2, promotes AFG2-mediated release of shuttling protein RLP24 from pre-60S ribosomal particles. The protein is Nucleoporin NUP116/NSP116 (NUP116) of Saccharomyces cerevisiae (strain ATCC 204508 / S288c) (Baker's yeast).